A 35-amino-acid chain; its full sequence is Alpha-amanitin proprotein (35 aa).

Positions 1–10 (MSDINATRLP) are excised as a propeptide. At Ile-11 the chain carries (3R,4R)-4,5-dihydroxyisoleucine; in form alpha-amanitin. Residue Ile-11 is modified to (3R,4S)-4-hydroxyisoleucine; in form gamma-amanitin. A cross-link (cyclopeptide (Ile-Pro)) is located at residues 11–18 (IWGIGCNP). Residues 12–16 (WGIGC) constitute a cross-link (2'-cysteinyl-6'-hydroxytryptophan sulfoxide (Trp-Cys)). Pro-18 is subject to 4-hydroxyproline. A propeptide spanning residues 19–35 (CVGDDVTTLLTRGEALC) is cleaved from the precursor.

It belongs to the MSDIN fungal toxin family. In terms of processing, processed by the macrocyclase-peptidase enzyme POPB to yield a toxic cyclic decapeptide. POPB first removes 10 residues from the N-terminus. Conformational trapping of the remaining peptide forces the enzyme to release this intermediate rather than proceed to macrocyclization. The enzyme rebinds the remaining peptide in a different conformation and catalyzes macrocyclization of the N-terminal 8 residues.

Major toxin belonging to the bicyclic octapeptides amatoxins that acts by binding non-competitively to RNA polymerase II and greatly slowing the elongation of transcripts from target promoters. This is Alpha-amanitin proprotein from Amanita bisporigera (Destroying angel).